The primary structure comprises 76 residues: Conotoxin Vc6.3 (76 aa).

The signal sequence occupies residues 1 to 22; the sequence is MKLTCVMIVAVLFLTANTFATA. Residues 23–50 constitute a propeptide that is removed on maturation; sequence DDPRNGLRDLFSIAHHEMKNPEASKLNE. 3 disulfides stabilise this stretch: Cys52–Cys66, Cys59–Cys70, and Cys67–Cys75.

The protein belongs to the conotoxin O1 superfamily. In terms of tissue distribution, expressed by the venom duct.

The protein resides in the secreted. The protein is Conotoxin Vc6.3 of Conus victoriae (Queen Victoria cone).